A 271-amino-acid chain; its full sequence is Mannosyl-3-phosphoglycerate phosphatase (271 aa).

The Nucleophile role is filled by aspartate 13. Residues aspartate 13, aspartate 15, and aspartate 214 each contribute to the Mg(2+) site.

The protein belongs to the HAD-like hydrolase superfamily. MPGP family. The cofactor is Mg(2+).

It is found in the cytoplasm. The enzyme catalyses 2-O-(alpha-D-mannosyl)-3-phosphoglycerate + H2O = (2R)-2-O-(alpha-D-mannosyl)-glycerate + phosphate. This chain is Mannosyl-3-phosphoglycerate phosphatase (yedP), found in Escherichia coli O6:K15:H31 (strain 536 / UPEC).